A 482-amino-acid polypeptide reads, in one-letter code: Bifunctional protein GlmU (482 aa).

Residues 1–238 (MSAIRPAAVV…HREIAGINNR (238 aa)) form a pyrophosphorylase region. Residues 12–15 (LAAG), K26, Q79, and 84–85 (GT) each bind UDP-N-acetyl-alpha-D-glucosamine. D110 is a binding site for Mg(2+). UDP-N-acetyl-alpha-D-glucosamine-binding residues include G147, E163, N178, and N236. Position 236 (N236) interacts with Mg(2+). A linker region spans residues 239 to 259 (VQLAEARRILNDRLLTGAMLA). Positions 260-482 (GVTVVDPATT…AVSREADGED (223 aa)) are N-acetyltransferase. Residues R341 and K359 each coordinate UDP-N-acetyl-alpha-D-glucosamine. Catalysis depends on H371, which acts as the Proton acceptor. Residues Y374 and N385 each contribute to the UDP-N-acetyl-alpha-D-glucosamine site. Acetyl-CoA-binding positions include A388, 394–395 (NY), S413, A431, and R448. Residues 460–482 (RKRPGSAAAKAAEAVSREADGED) are disordered. The span at 464 to 473 (GSAAAKAAEA) shows a compositional bias: low complexity.

This sequence in the N-terminal section; belongs to the N-acetylglucosamine-1-phosphate uridyltransferase family. The protein in the C-terminal section; belongs to the transferase hexapeptide repeat family. Homotrimer. The cofactor is Mg(2+).

Its subcellular location is the cytoplasm. The enzyme catalyses alpha-D-glucosamine 1-phosphate + acetyl-CoA = N-acetyl-alpha-D-glucosamine 1-phosphate + CoA + H(+). It carries out the reaction N-acetyl-alpha-D-glucosamine 1-phosphate + UTP + H(+) = UDP-N-acetyl-alpha-D-glucosamine + diphosphate. The protein operates within nucleotide-sugar biosynthesis; UDP-N-acetyl-alpha-D-glucosamine biosynthesis; N-acetyl-alpha-D-glucosamine 1-phosphate from alpha-D-glucosamine 6-phosphate (route II): step 2/2. Its pathway is nucleotide-sugar biosynthesis; UDP-N-acetyl-alpha-D-glucosamine biosynthesis; UDP-N-acetyl-alpha-D-glucosamine from N-acetyl-alpha-D-glucosamine 1-phosphate: step 1/1. It participates in bacterial outer membrane biogenesis; LPS lipid A biosynthesis. In terms of biological role, catalyzes the last two sequential reactions in the de novo biosynthetic pathway for UDP-N-acetylglucosamine (UDP-GlcNAc). The C-terminal domain catalyzes the transfer of acetyl group from acetyl coenzyme A to glucosamine-1-phosphate (GlcN-1-P) to produce N-acetylglucosamine-1-phosphate (GlcNAc-1-P), which is converted into UDP-GlcNAc by the transfer of uridine 5-monophosphate (from uridine 5-triphosphate), a reaction catalyzed by the N-terminal domain. The protein is Bifunctional protein GlmU of Streptomyces coelicolor (strain ATCC BAA-471 / A3(2) / M145).